We begin with the raw amino-acid sequence, 165 residues long: Glutamyl-tRNA(Gln) amidotransferase subunit F, mitochondrial (165 aa).

Residues 1–19 constitute a mitochondrion transit peptide; that stretch reads MKSILRSTTRNLITSSRRF.

This sequence belongs to the GatF family. Subunit of the heterotrimeric GatFAB amidotransferase (AdT) complex, composed of A, B and F subunits.

It is found in the mitochondrion inner membrane. It catalyses the reaction L-glutamyl-tRNA(Gln) + L-glutamine + ATP + H2O = L-glutaminyl-tRNA(Gln) + L-glutamate + ADP + phosphate + H(+). In terms of biological role, allows the formation of correctly charged Gln-tRNA(Gln) through the transamidation of misacylated Glu-tRNA(Gln) in the mitochondria. The reaction takes place in the presence of glutamine and ATP through an activated gamma-phospho-Glu-tRNA(Gln). Required for proper protein synthesis within the mitochondrion. This Candida albicans (strain SC5314 / ATCC MYA-2876) (Yeast) protein is Glutamyl-tRNA(Gln) amidotransferase subunit F, mitochondrial.